Consider the following 579-residue polypeptide: Transcription factor COE2 (579 aa).

The segment at 63–66 (RKSN) is interaction with DNA. The segment at 149 to 168 (CRVLLTHEVMCSRCCEKKSC) adopts a C5-type zinc-finger fold. 2 interaction with DNA regions span residues 195-202 (NCLKTAGN) and 234-237 (NNSK). In terms of domain architecture, IPT/TIG spans 260–343 (PCIKAISPSE…KGAPGRFIYT (84 aa)). Disordered regions lie at residues 442 to 482 (GVSI…YGSN), 514 to 533 (AIMP…LPFS), and 549 to 579 (LRPQ…VPPM). A compositionally biased stretch (polar residues) spans 449–459 (GQTSGQGYTRN). Composition is skewed to low complexity over residues 460-472 (SSSL…PSSS) and 521-533 (PGSS…LPFS).

This sequence belongs to the COE family.

The protein resides in the nucleus. This Danio rerio (Zebrafish) protein is Transcription factor COE2 (coe2).